The following is a 304-amino-acid chain: Putative metal ion transporter ZIPCO (304 aa).

A run of 8 helical transmembrane segments spans residues 1–21, 46–66, 74–94, 158–178, 183–203, 218–238, 243–263, and 275–295; these read MWLK…VIYL, VASG…VIGL, IYCC…TDIL, FFIV…IGSL, PIII…LMIY, IYAW…VLSF, FVEI…SFNM, and FYIS…MIVF.

The protein resides in the cell membrane. In terms of biological role, putative transporter for the divalent zinc and iron cations. Required for the development of liver-stage parasites. This Plasmodium berghei (strain Anka) protein is Putative metal ion transporter ZIPCO.